The chain runs to 201 residues: MNPEYDYLFKLLLIGDSGVGKSCLLLRFADDTYTESYISTIGVDFKIRTIELDGKTIKLQIWDTAGQERFRTITSSYYRGAHGIIVVYDVTDQESFNNVKQWLHEIDRYACENVNKLLVGNKSDLTAKRVVSTDAAKEFAESLGIEFLETSAKNAANVEKAFMMMAAQIKKRMANAPVAPKAGVKLTPGQQVPSNGGSKCC.

GTP contacts are provided by residues 15 to 23 (GDSGVGKSC), 33 to 40 (YTESYIST), 63 to 67 (DTAGQ), 121 to 124 (NKSD), and 151 to 153 (SAK). Residues 37-45 (YISTIGVDF) carry the Effector region motif. S-geranylgeranyl cysteine attachment occurs at residues cysteine 200 and cysteine 201.

The protein belongs to the small GTPase superfamily. Rab family.

The protein resides in the endoplasmic reticulum membrane. It localises to the golgi apparatus membrane. The protein localises to the cytoplasm. It is found in the preautophagosomal structure membrane. Rab activation is generally mediated by a guanine exchange factor (GEF), while inactivation through hydrolysis of bound GTP is catalyzed by a GTPase activating protein (GAP). Functionally, the small GTPases Rab are key regulators of intracellular membrane trafficking, from the formation of transport vesicles to their fusion with membranes. Rabs cycle between an inactive GDP-bound form and an active GTP-bound form that is able to recruit to membranes different set of downstream effectors directly responsible for vesicle formation, movement, tethering and fusion. YPT1 regulates the trafficking of secretory vesicles from the endoplasmic reticulum (ER) to the Golgi. Plays a role in the initial events of the autophagic vacuole development which take place at specialized regions of the endoplasmic reticulum. Also involved in the recycling of membrane proteins. This Phytophthora infestans (Potato late blight agent) protein is Ras-like GTP-binding protein YPT1 (YPT1).